Reading from the N-terminus, the 125-residue chain is Large ribosomal subunit protein uL30 (125 aa).

Positions 1–61 (MSKLKVKLLR…HLVGVAYRID (61 aa)) are large ribosomal subunit protein uL30. The unknown stretch occupies residues 62–125 (FSGDIPTVER…KNWKGEEVEL (64 aa)).

Belongs to the universal ribosomal protein uL30 family. Part of the 50S ribosomal subunit.

This Aquifex aeolicus (strain VF5) protein is Large ribosomal subunit protein uL30.